Reading from the N-terminus, the 474-residue chain is uncharacterized protein (474 aa).

Over residues 1–11 the composition is skewed to acidic residues; it reads MGGSDFEDDEL. Positions 1-163 are disordered; it reads MGGSDFEDDE…ETSPFNREDG (163 aa). Residues 12–25 show a composition bias toward basic and acidic residues; the sequence is FKDLYGEENEKKVE. A compositionally biased stretch (polar residues) spans 27 to 39; sequence ASGNQETSNVTPT. Over residues 40–76 the composition is skewed to basic and acidic residues; sequence KENEGYEELEKSGEAGAERTKENPFREEPGADFDRSG. The span at 129-140 shows a compositional bias: polar residues; it reads NDNYNENQSALT. RRM domains follow at residues 163 to 245 and 247 to 324; these read GKMF…EQEK and AKMF…RATP. A disordered region spans residues 412–474; that stretch reads DPSKMNQGTG…GGHSFHPYRR (63 aa). Residues 425 to 434 show a composition bias toward low complexity; sequence PFSPSMPSGS. Positions 435-444 are enriched in gly residues; sequence SRGGYHGRNP.

The protein localises to the nucleus. This is an uncharacterized protein from Schizosaccharomyces pombe (strain 972 / ATCC 24843) (Fission yeast).